Here is a 255-residue protein sequence, read N- to C-terminus: 3-deoxy-manno-octulosonate cytidylyltransferase (255 aa).

It belongs to the KdsB family.

It localises to the cytoplasm. The enzyme catalyses 3-deoxy-alpha-D-manno-oct-2-ulosonate + CTP = CMP-3-deoxy-beta-D-manno-octulosonate + diphosphate. The protein operates within nucleotide-sugar biosynthesis; CMP-3-deoxy-D-manno-octulosonate biosynthesis; CMP-3-deoxy-D-manno-octulosonate from 3-deoxy-D-manno-octulosonate and CTP: step 1/1. It functions in the pathway bacterial outer membrane biogenesis; lipopolysaccharide biosynthesis. Its function is as follows. Activates KDO (a required 8-carbon sugar) for incorporation into bacterial lipopolysaccharide in Gram-negative bacteria. The polypeptide is 3-deoxy-manno-octulosonate cytidylyltransferase (Cellvibrio japonicus (strain Ueda107) (Pseudomonas fluorescens subsp. cellulosa)).